Consider the following 106-residue polypeptide: MYAVLVTGGKQYRVVQGETLRVEKLDVETGSDVTFNSVLLMGSSDGIHVGEALKDASVTAKVVAHGRARKVRIIKFRRRKHHMKHQGHRQYYTEIQITGISGPAKQ.

This sequence belongs to the bacterial ribosomal protein bL21 family. In terms of assembly, part of the 50S ribosomal subunit. Contacts protein L20.

Its function is as follows. This protein binds to 23S rRNA in the presence of protein L20. This chain is Large ribosomal subunit protein bL21, found in Xylella fastidiosa (strain 9a5c).